We begin with the raw amino-acid sequence, 2175 residues long: Homeobox protein cut (2175 aa).

Disordered stretches follow at residues 139-170 (NLLA…QQSG) and 249-432 (GNVK…GQPA). 2 stretches are compositionally biased toward low complexity: residues 153–169 (LLSA…LQQS) and 249–268 (GNVK…SNNS). Positions 265-343 (SNNSHQDEEE…ENKDAGEASL (79 aa)) form a coiled coil. The span at 271 to 294 (DEEELDDEEEDEEEDEDEDDEEEN) shows a compositional bias: acidic residues. Residues 309 to 320 (QQETRTEPSATT) are compositionally biased toward polar residues. The span at 344–359 (NVSNNHNTTDSNNSCS) shows a compositional bias: low complexity. Residues 360–374 (RKNNNGGNESEQHVA) are compositionally biased toward polar residues. A compositionally biased stretch (low complexity) spans 384–415 (NNNTNTSNNNNTSNTATSNTNNNNNNNSSSGN). Residues 433-499 (VLLAAKDKEI…NEALAEATAL (67 aa)) are a coiled coil. Positions 503 to 515 (ASTNNNNNSQSSD) are enriched in low complexity. Disordered regions lie at residues 503 to 600 (ASTN…KIKK) and 656 to 765 (ASDA…NTNA). Over residues 546–568 (AEDDEEDEDQAMLVDSEEAEDKP) the composition is skewed to acidic residues. A compositionally biased stretch (basic residues) spans 673-696 (QQQHQHQQQHHQQQHLHQQHHHHL). Residues 697-710 (QQQPNSGSNSNPAS) are compositionally biased toward low complexity. Residues 714 to 735 (HHGHHLHGHGLLHPSSAHHLHH) are compositionally biased toward basic residues. The segment covering 738-765 (TESNSNSSTPTAAGNNNGSNNSSSNTNA) has biased composition (low complexity). A DNA-binding region (CUT 1) is located at residues 877–964 (NMDKYANQAL…VMLLKSLIPK (88 aa)). 2 disordered regions span residues 1001-1083 (LMKQ…HDDQ) and 1197-1289 (QRSS…EFAA). Composition is skewed to basic and acidic residues over residues 1009–1030 (QHRE…EDSK) and 1062–1083 (QRER…HDDQ). A coiled-coil region spans residues 1056-1161 (EQAAAQQRER…QQQAAQAQAQ (106 aa)). The segment covering 1249–1282 (GAPPTAAPPTGGASSNSAAPSPLSNSILPPALSS) has biased composition (low complexity). Positions 1330 to 1417 (QQQFDMFNNL…VHKLVASQYK (88 aa)) form a DNA-binding region, CUT 2. Positions 1463–1522 (AQAQHLMQQMQAAAMSAAMQQQQVAQAQQQAQQAQQAQQHLQQQAQQHLQQQQHLAQQQH) form a coiled coil. Positions 1507–1540 (AQQHLQQQQHLAQQQHPHQQHHQAAAAAAALHHQ) are enriched in low complexity. 6 disordered regions span residues 1507–1588 (AQQH…PMLM), 1695–1747 (ERRE…PSKK), 1803–1826 (QVPH…ATPF), 1922–1955 (RSDD…DKTT), 2069–2097 (KQEE…QKLK), and 2113–2175 (SSTG…GWNY). Residues 1564–1573 (AQPGGPGGNQ) show a composition bias toward gly residues. The segment at residues 1608-1695 (YEMAALTQDL…VERLQLLKNE (88 aa)) is a DNA-binding region (CUT 3). Low complexity predominate over residues 1709 to 1732 (NQQDNSSDTSSNDTNDFYTSSPGP). The homeobox DNA-binding region spans 1745 to 1804 (SKKQRVLFSEEQKEALRLAFALDPYPNVGTIEFLANELGLATRTITNWFHNHRMRLKQQV). Residues S1940 and S1944 each carry the phosphoserine modification. The span at 2126–2135 (PLAPPPPPPA) shows a compositional bias: pro residues. Residues 2136–2175 (ASSSIVSGESTTSSSSSSNTSSSTPAVTTAAATAAAGWNY) show a composition bias toward low complexity.

This sequence belongs to the CUT homeobox family. In terms of tissue distribution, detected in many cells in the central nervous system, all external sensory organs, some peripheral neurons, and in the non-neural cells of the spiracles and the Malpighian tubules.

The protein localises to the nucleus. Regulator of cell fate decisions in multiple lineages. Specifically, functions as a determination factor that specifies sensory organ identity in precursor cells. Probably also involved in cell type specification of Malpighian tubules. In absence of cut gene external sensory organs are transformed into chordotonal organs. This chain is Homeobox protein cut (ct), found in Drosophila melanogaster (Fruit fly).